Reading from the N-terminus, the 146-residue chain is Large ribosomal subunit protein uL15 (146 aa).

Residues 1-10 are compositionally biased toward basic and acidic residues; that stretch reads MTLKLHDLRP. Positions 1–41 are disordered; the sequence is MTLKLHDLRPARGSKIARTRVGRGDGSKGKTAGRGTKGTRA.

It belongs to the universal ribosomal protein uL15 family. As to quaternary structure, part of the 50S ribosomal subunit.

Functionally, binds to the 23S rRNA. This is Large ribosomal subunit protein uL15 from Mycobacterium tuberculosis (strain ATCC 25177 / H37Ra).